Reading from the N-terminus, the 512-residue chain is Glycerol kinase, glycosomal (512 aa).

Substrate is bound at residue Thr-11. Residue Arg-15 participates in ATP binding. Positions 84, 139, and 254 each coordinate substrate. Residues Thr-276, Gly-321, and 422-426 (GLSKN) each bind ATP. Residues 510-512 (AKL) carry the Microbody targeting signal motif.

This sequence belongs to the FGGY kinase family.

The protein resides in the glycosome. The catalysed reaction is glycerol + ATP = sn-glycerol 3-phosphate + ADP + H(+). The protein operates within polyol metabolism; glycerol degradation via glycerol kinase pathway; sn-glycerol 3-phosphate from glycerol: step 1/1. Functionally, catalyzes the phosphorylation of glycerol using ATP. Under anoxic conditions, when glycerol 3-phosphate accumulates in the glycosome, it catalyzes the reverse reaction, maintaining the ATP balance. Key enzyme for the survival of bloodstream forms under anoxic conditions. The polypeptide is Glycerol kinase, glycosomal (GK) (Trypanosoma brucei brucei).